The sequence spans 1288 residues: 5-oxoprolinase (1288 aa).

Thr-151 bears the Phosphothreonine mark. Positions 1249–1269 are disordered; the sequence is GGGGYGDPEDPAPLPGSPLQP. Residue Ser-1265 is modified to Phosphoserine.

This sequence belongs to the oxoprolinase family. As to quaternary structure, homodimer. In terms of tissue distribution, expressed in coronary artery and kidney.

Its subcellular location is the cytoplasm. The protein localises to the cytosol. The catalysed reaction is 5-oxo-L-proline + ATP + 2 H2O = L-glutamate + ADP + phosphate + H(+). Catalyzes the cleavage of 5-oxo-L-proline to form L-glutamate coupled to the hydrolysis of ATP to ADP and inorganic phosphate. The chain is 5-oxoprolinase (OPLAH) from Bos taurus (Bovine).